Reading from the N-terminus, the 175-residue chain is Archaemetzincin (175 aa).

Histidine 125 is a binding site for Zn(2+). The active-site Proton acceptor is glutamate 126. Residues histidine 129, histidine 135, cysteine 136, cysteine 141, cysteine 160, and cysteine 163 each coordinate Zn(2+).

It belongs to the peptidase M54 family. In terms of assembly, monomer. Zn(2+) serves as cofactor.

Functionally, probable zinc metalloprotease whose natural substrate is unknown. Does not show endo- or exopeptidase activity against resorufin labeled casein, p-nitroanilide (pNA), amidomethylcoumarin (AMC) (one to three amino acids in length), and hippuryl-aminoacid substrates. The polypeptide is Archaemetzincin (Methanopyrus kandleri (strain AV19 / DSM 6324 / JCM 9639 / NBRC 100938)).